The primary structure comprises 219 residues: Ion-translocating oxidoreductase complex subunit G (219 aa).

The chain crosses the membrane as a helical span at residues 25–45 (GLLLGLFSLVSALMLALASDA). Position 187 is an FMN phosphoryl threonine (Thr187).

This sequence belongs to the RnfG family. The complex is composed of six subunits: RnfA, RnfB, RnfC, RnfD, RnfE and RnfG. The cofactor is FMN.

It localises to the cellular chromatophore membrane. In terms of biological role, part of a membrane-bound complex that couples electron transfer with translocation of ions across the membrane. In Cereibacter sphaeroides (strain ATCC 17029 / ATH 2.4.9) (Rhodobacter sphaeroides), this protein is Ion-translocating oxidoreductase complex subunit G.